Consider the following 250-residue polypeptide: Virulence plasmid protein pGP6-D-related protein (250 aa).

This sequence belongs to the UPF0137 (pGP6-D) family.

This Chlamydia pneumoniae (Chlamydophila pneumoniae) protein is Virulence plasmid protein pGP6-D-related protein.